We begin with the raw amino-acid sequence, 27 residues long: Phospholipase A2 1 (27 aa).

The protein belongs to the phospholipase A2 family. Group I subfamily. Requires Ca(2+) as cofactor. In terms of tissue distribution, expressed by the venom gland.

It localises to the secreted. The enzyme catalyses a 1,2-diacyl-sn-glycero-3-phosphocholine + H2O = a 1-acyl-sn-glycero-3-phosphocholine + a fatty acid + H(+). Functionally, snake venom phospholipase A2 (PLA2) that inhibits neuromuscular transmission by blocking acetylcholine release from the nerve termini. PLA2 catalyzes the calcium-dependent hydrolysis of the 2-acyl groups in 3-sn-phosphoglycerides. This Micrurus nigrocinctus (Central American coral snake) protein is Phospholipase A2 1.